The sequence spans 635 residues: Threonine--tRNA ligase (635 aa).

A TGS domain is found at 1-61 (MIAITLPDGS…EQNVDLAIVT (61 aa)). The segment at 242–533 (DHRKLGKLLD…LLENHAGALP (292 aa)) is catalytic. 3 residues coordinate Zn(2+): cysteine 333, histidine 384, and histidine 510.

The protein belongs to the class-II aminoacyl-tRNA synthetase family. As to quaternary structure, homodimer. The cofactor is Zn(2+).

The protein resides in the cytoplasm. It catalyses the reaction tRNA(Thr) + L-threonine + ATP = L-threonyl-tRNA(Thr) + AMP + diphosphate + H(+). In terms of biological role, catalyzes the attachment of threonine to tRNA(Thr) in a two-step reaction: L-threonine is first activated by ATP to form Thr-AMP and then transferred to the acceptor end of tRNA(Thr). Also edits incorrectly charged L-seryl-tRNA(Thr). This is Threonine--tRNA ligase from Ralstonia nicotianae (strain ATCC BAA-1114 / GMI1000) (Ralstonia solanacearum).